A 143-amino-acid chain; its full sequence is ATP synthase F(0) complex subunit C2, mitochondrial (143 aa).

The N-terminal 68 residues, 1-68 (MYTCAKFVST…RSFQTSAISR (68 aa)), are a transit peptide targeting the mitochondrion. The helical transmembrane segment at 84–104 (VGVAGSGAGIGTVFGSLIIGY) threads the bilayer. Lys111 is modified (N6,N6,N6-trimethyllysine). A helical transmembrane segment spans residues 119–139 (ILGFALSEAMGLFCLMVAFLI).

Belongs to the ATPase C chain family. In terms of assembly, F-type ATPases have 2 components, CF(1) - the catalytic core - and CF(0) - the membrane proton channel. CF(1) has five subunits: alpha(3), beta(3), gamma(1), delta(1), epsilon(1). CF(0) has three main subunits: a, b and c. Interacts with DNAJC30; interaction is direct. Trimethylated by ATPSCKMT at Lys-111. Methylation is required for proper incorporation of the C subunit into the ATP synthase complex and mitochondrial respiration.

Its subcellular location is the mitochondrion membrane. Mitochondrial membrane ATP synthase (F(1)F(0) ATP synthase or Complex V) produces ATP from ADP in the presence of a proton gradient across the membrane which is generated by electron transport complexes of the respiratory chain. F-type ATPases consist of two structural domains, F(1) - containing the extramembraneous catalytic core and F(0) - containing the membrane proton channel, linked together by a central stalk and a peripheral stalk. During catalysis, ATP synthesis in the catalytic domain of F(1) is coupled via a rotary mechanism of the central stalk subunits to proton translocation. Part of the complex F(0) domain. A homomeric c-ring of probably 10 subunits is part of the complex rotary element. The chain is ATP synthase F(0) complex subunit C2, mitochondrial from Bos taurus (Bovine).